Consider the following 319-residue polypeptide: Glutathione synthetase (319 aa).

One can recognise an ATP-grasp domain in the interval 125-311 (KLFTAWFPEL…ITGMLMDAIE (187 aa)). 151–207 (HQEHGDIILKPLDGMGGTSIFRVKQDDPNLSVIIETLTELSSRFCMAQNFLPAIKEG) is a binding site for ATP. Residues Glu281 and Asn283 each coordinate Mg(2+).

This sequence belongs to the prokaryotic GSH synthase family. Requires Mg(2+) as cofactor. It depends on Mn(2+) as a cofactor.

The enzyme catalyses gamma-L-glutamyl-L-cysteine + glycine + ATP = glutathione + ADP + phosphate + H(+). The protein operates within sulfur metabolism; glutathione biosynthesis; glutathione from L-cysteine and L-glutamate: step 2/2. This Yersinia pestis protein is Glutathione synthetase.